Reading from the N-terminus, the 102-residue chain is NADH-quinone oxidoreductase subunit K (102 aa).

A run of 3 helical transmembrane segments spans residues 2-22 (LDFY…GVIL), 26-46 (IFTI…IFAT), and 58-78 (VIVM…LALI).

It belongs to the complex I subunit 4L family. In terms of assembly, NDH-1 is composed of 14 different subunits. Subunits NuoA, H, J, K, L, M, N constitute the membrane sector of the complex.

It is found in the cell inner membrane. It carries out the reaction a quinone + NADH + 5 H(+)(in) = a quinol + NAD(+) + 4 H(+)(out). In terms of biological role, NDH-1 shuttles electrons from NADH, via FMN and iron-sulfur (Fe-S) centers, to quinones in the respiratory chain. The immediate electron acceptor for the enzyme in this species is believed to be ubiquinone. Couples the redox reaction to proton translocation (for every two electrons transferred, four hydrogen ions are translocated across the cytoplasmic membrane), and thus conserves the redox energy in a proton gradient. The protein is NADH-quinone oxidoreductase subunit K of Campylobacter fetus subsp. fetus (strain 82-40).